The primary structure comprises 63 residues: Conotoxin PnMRCL-0111 (63 aa).

The N-terminal stretch at 1–19 is a signal peptide; that stretch reads MRCLPVFIVLLLLIVSAPG. Residues 20–49 constitute a propeptide that is removed on maturation; sequence FDARPKTEDDVPLSSFHDDLQRTVRTLLDI. At Trp62 the chain carries Tryptophan amide.

The protein belongs to the conotoxin T superfamily. Contains 2 disulfide bonds that can be either 'C1-C3, C2-C4' or 'C1-C4, C2-C3', since these disulfide connectivities have been observed for conotoxins with cysteine framework V (for examples, see AC P0DQQ7 and AC P81755). In terms of tissue distribution, expressed by the venom duct.

It is found in the secreted. The sequence is that of Conotoxin PnMRCL-0111 from Conus pennaceus (Feathered cone).